A 334-amino-acid chain; its full sequence is Aspartate carbamoyltransferase catalytic subunit (334 aa).

Positions 71 and 72 each coordinate carbamoyl phosphate. Lys-99 is a binding site for L-aspartate. Carbamoyl phosphate contacts are provided by Arg-121, His-151, and Gln-154. Positions 184 and 239 each coordinate L-aspartate. Gly-280 and Pro-281 together coordinate carbamoyl phosphate.

Belongs to the aspartate/ornithine carbamoyltransferase superfamily. ATCase family. In terms of assembly, heterododecamer (2C3:3R2) of six catalytic PyrB chains organized as two trimers (C3), and six regulatory PyrI chains organized as three dimers (R2).

It catalyses the reaction carbamoyl phosphate + L-aspartate = N-carbamoyl-L-aspartate + phosphate + H(+). The protein operates within pyrimidine metabolism; UMP biosynthesis via de novo pathway; (S)-dihydroorotate from bicarbonate: step 2/3. Catalyzes the condensation of carbamoyl phosphate and aspartate to form carbamoyl aspartate and inorganic phosphate, the committed step in the de novo pyrimidine nucleotide biosynthesis pathway. The protein is Aspartate carbamoyltransferase catalytic subunit of Pseudomonas fluorescens (strain ATCC BAA-477 / NRRL B-23932 / Pf-5).